The primary structure comprises 493 residues: Glutamate--tRNA ligase (493 aa).

A 'HIGH' region motif is present at residues 10 to 20 (PSPTGFVHIGS). Zn(2+) contacts are provided by cysteine 114, cysteine 116, cysteine 141, and glutamate 143. The 'KMSKS' region signature appears at 258 to 262 (KLSKR). Residue lysine 261 participates in ATP binding.

The protein belongs to the class-I aminoacyl-tRNA synthetase family. Glutamate--tRNA ligase type 1 subfamily. Monomer. Zn(2+) serves as cofactor.

The protein localises to the cytoplasm. It carries out the reaction tRNA(Glu) + L-glutamate + ATP = L-glutamyl-tRNA(Glu) + AMP + diphosphate. Catalyzes the attachment of glutamate to tRNA(Glu) in a two-step reaction: glutamate is first activated by ATP to form Glu-AMP and then transferred to the acceptor end of tRNA(Glu). The protein is Glutamate--tRNA ligase of Alkaliphilus metalliredigens (strain QYMF).